Consider the following 356-residue polypeptide: Probable butyrate kinase (356 aa).

It belongs to the acetokinase family.

Its subcellular location is the cytoplasm. It catalyses the reaction butanoate + ATP = butanoyl phosphate + ADP. This is Probable butyrate kinase from Coprothermobacter proteolyticus (strain ATCC 35245 / DSM 5265 / OCM 4 / BT).